The chain runs to 184 residues: NADH-quinone oxidoreductase subunit B (184 aa).

Residues C37, C38, C103, and C132 each contribute to the [4Fe-4S] cluster site.

This sequence belongs to the complex I 20 kDa subunit family. In terms of assembly, NDH-1 is composed of 14 different subunits. Subunits NuoB, C, D, E, F, and G constitute the peripheral sector of the complex. [4Fe-4S] cluster is required as a cofactor.

The protein localises to the cell membrane. The enzyme catalyses a quinone + NADH + 5 H(+)(in) = a quinol + NAD(+) + 4 H(+)(out). In terms of biological role, NDH-1 shuttles electrons from NADH, via FMN and iron-sulfur (Fe-S) centers, to quinones in the respiratory chain. The immediate electron acceptor for the enzyme in this species is believed to be a menaquinone. Couples the redox reaction to proton translocation (for every two electrons transferred, four hydrogen ions are translocated across the cytoplasmic membrane), and thus conserves the redox energy in a proton gradient. The protein is NADH-quinone oxidoreductase subunit B of Mycobacterium sp. (strain JLS).